A 127-amino-acid polypeptide reads, in one-letter code: Fumarate reductase subunit C (127 aa).

3 consecutive transmembrane segments (helical) span residues 30 to 50 (ATVLPLILFTLFLTFGLGCLV), 58 to 78 (GWLAFMANPIVVAINIVALLG), and 107 to 127 (IIVLTQWAAVAFISLIVLIVV).

It belongs to the FrdC family. As to quaternary structure, part of an enzyme complex containing four subunits: a flavoprotein (FrdA), an iron-sulfur protein (FrdB), and two hydrophobic anchor proteins (FrdC and FrdD).

The protein resides in the cell inner membrane. In terms of biological role, anchors the catalytic components of the fumarate reductase complex to the cell membrane, binds quinones. The chain is Fumarate reductase subunit C from Vibrio parahaemolyticus serotype O3:K6 (strain RIMD 2210633).